The chain runs to 403 residues: Probable tRNA sulfurtransferase (403 aa).

The THUMP domain maps to 60 to 165 (KLAEERLKPI…KEGVFLSCRT (106 aa)). ATP is bound by residues 183–184 (ML), 208–209 (HF), Arg265, Gly287, and Gln296.

It belongs to the ThiI family.

It localises to the cytoplasm. It catalyses the reaction [ThiI sulfur-carrier protein]-S-sulfanyl-L-cysteine + a uridine in tRNA + 2 reduced [2Fe-2S]-[ferredoxin] + ATP + H(+) = [ThiI sulfur-carrier protein]-L-cysteine + a 4-thiouridine in tRNA + 2 oxidized [2Fe-2S]-[ferredoxin] + AMP + diphosphate. The enzyme catalyses [ThiS sulfur-carrier protein]-C-terminal Gly-Gly-AMP + S-sulfanyl-L-cysteinyl-[cysteine desulfurase] + AH2 = [ThiS sulfur-carrier protein]-C-terminal-Gly-aminoethanethioate + L-cysteinyl-[cysteine desulfurase] + A + AMP + 2 H(+). The protein operates within cofactor biosynthesis; thiamine diphosphate biosynthesis. Catalyzes the ATP-dependent transfer of a sulfur to tRNA to produce 4-thiouridine in position 8 of tRNAs, which functions as a near-UV photosensor. Also catalyzes the transfer of sulfur to the sulfur carrier protein ThiS, forming ThiS-thiocarboxylate. This is a step in the synthesis of thiazole, in the thiamine biosynthesis pathway. The sulfur is donated as persulfide by IscS. The sequence is that of Probable tRNA sulfurtransferase from Listeria welshimeri serovar 6b (strain ATCC 35897 / DSM 20650 / CCUG 15529 / CIP 8149 / NCTC 11857 / SLCC 5334 / V8).